Here is a 366-residue protein sequence, read N- to C-terminus: UDP-GlcNAc:ribostamycin N-acetylglucosaminyltransferase (366 aa).

Over residues 342 to 352 (AAGAGPAVPAG) the composition is skewed to low complexity. A disordered region spans residues 342 to 366 (AAGAGPAVPAGAGEGRGGREEEHGG). A compositionally biased stretch (basic and acidic residues) spans 357 to 366 (RGGREEEHGG).

The protein belongs to the glycosyltransferase group 1 family. Glycosyltransferase 4 subfamily. The cofactor is a divalent metal cation.

The enzyme catalyses ribostamycin + UDP-N-acetyl-alpha-D-glucosamine = 2'''-acetyl-6'''-hydroxyneomycin C + UDP + H(+). The protein operates within antibiotic biosynthesis; neomycin biosynthesis. Its function is as follows. Glycosyltransferase involved in the biosynthesis of neomycin by mediating glycosylation of ribostamycin with UDP-GlcNAc as a sugar donor to generate 2'''-acetyl-6'''-hydroxyneomycin C. In Streptomyces fradiae (Streptomyces roseoflavus), this protein is UDP-GlcNAc:ribostamycin N-acetylglucosaminyltransferase (neoK).